The sequence spans 370 residues: DNA replication and repair protein RecF (370 aa).

Gly-30–Thr-37 serves as a coordination point for ATP.

The protein belongs to the RecF family.

The protein resides in the cytoplasm. In terms of biological role, the RecF protein is involved in DNA metabolism; it is required for DNA replication and normal SOS inducibility. RecF binds preferentially to single-stranded, linear DNA. It also seems to bind ATP. This Listeria monocytogenes serotype 4b (strain CLIP80459) protein is DNA replication and repair protein RecF.